Reading from the N-terminus, the 420-residue chain is Gamma-glutamyl phosphate reductase (420 aa).

This sequence belongs to the gamma-glutamyl phosphate reductase family.

It localises to the cytoplasm. It catalyses the reaction L-glutamate 5-semialdehyde + phosphate + NADP(+) = L-glutamyl 5-phosphate + NADPH + H(+). The protein operates within amino-acid biosynthesis; L-proline biosynthesis; L-glutamate 5-semialdehyde from L-glutamate: step 2/2. Its function is as follows. Catalyzes the NADPH-dependent reduction of L-glutamate 5-phosphate into L-glutamate 5-semialdehyde and phosphate. The product spontaneously undergoes cyclization to form 1-pyrroline-5-carboxylate. The polypeptide is Gamma-glutamyl phosphate reductase (Streptococcus pneumoniae serotype 2 (strain D39 / NCTC 7466)).